Consider the following 531-residue polypeptide: MDGIVTEVAVGVKRGSDELLSGSVLSSPNSNMSSMVVTANGNDSKKFKGEDKMDGAPSRVLHIRKLPGEVTETEVIALGLPFGKVTNILMLKGKNQAFLELATEEAAITMVNYYSAVTPHLRNQPIYIQYSNHKELKTDNTLNQRAQAVLQAVTAVQTANTPLSGTTVSESAVTPAQSPVLRIIIDNMYYPVTLDVLHQIFSKFGAVLKIITFTKNNQFQALLQYGDPVNAQQAKLALDGQNIYNACCTLRIDFSKLVNLNVKYNNDKSRDYTRPDLPSGDGQPALDPAIAAAFAKETSLLAVPGALSPLAIPNAAAAAAAAAAGRVGMPGVSAGGNTVLLVSNLNEEMVTPQSLFTLFGVYGDVQRVKILYNKKDSALIQMADGNQSQLAMNHLNGQKMYGKIIRVTLSKHQTVQLPREGLDDQGLTKDFGNSPLHRFKKPGSKNFQNIFPPSATLHLSNIPPSVAEEDLRTLFANTGGTVKAFKFFQDHKMALLQMATVEEAIQALIDLHNYNLGENHHLRVSFSKSTI.

The residue at position 1 (Met1) is an N-acetylmethionine. Residues Ser26 and Ser27 each carry the phosphoserine modification. RRM domains lie at 59–133 (RVLH…YSNH) and 181–257 (LRII…FSKL). Ser308 carries the post-translational modification Phosphoserine. 2 RRM domains span residues 338–412 (TVLL…LSKH) and 455–529 (ATLH…FSKS).

In terms of assembly, monomer. Interacts with NOVA1; the interaction is direct. Identified in a mRNP complex, at least composed of DHX9, DDX3X, ELAVL1, HNRNPU, IGF2BP1, ILF3, PABPC1, PCBP2, PTBP2, STAU1, STAU2, SYNCRIP and YBX1. Part of a ternary complex containing KHSRP and HNRPH1. Interacts with NOVA2; the interaction is direct. In terms of tissue distribution, mainly expressed in brain although also detected in other tissues like heart and skeletal muscle. Isoform 1 and isoform 2 are specifically expressed in neuronal tissues. Isoform 3 and isoform 4 are expressed in non-neuronal tissues. Isoform 5 and isoform 6 are truncated forms expressed in non-neuronal tissues.

The protein resides in the nucleus. Its function is as follows. RNA-binding protein which binds to intronic polypyrimidine tracts and mediates negative regulation of exons splicing. May antagonize in a tissue-specific manner the ability of NOVA1 to activate exon selection. In addition to its function in pre-mRNA splicing, plays also a role in the regulation of translation. Reduced affinity for RNA. The sequence is that of Polypyrimidine tract-binding protein 2 from Homo sapiens (Human).